A 620-amino-acid chain; its full sequence is Chaperone protein DnaK (620 aa).

Thr-174 is modified (phosphothreonine; by autocatalysis). The interval 590–620 is disordered; that stretch reads AAGAGPDMSGAGPQGDTYAGDDVVDGDYREV.

This sequence belongs to the heat shock protein 70 family.

Its function is as follows. Acts as a chaperone. This Lachnoclostridium phytofermentans (strain ATCC 700394 / DSM 18823 / ISDg) (Clostridium phytofermentans) protein is Chaperone protein DnaK.